Consider the following 627-residue polypeptide: Lipid-A-disaccharide synthase (627 aa).

Residues 1–224 (MFPLYLVRLL…IYKKSRLSEF (224 aa)) form a unknown region. Residues 225-627 (HNPSYFISAG…YVQKNVRPSF (403 aa)) form a lipid-A-disaccharide synthase region.

In the C-terminal section; belongs to the LpxB family.

The catalysed reaction is a lipid X + a UDP-2-N,3-O-bis[(3R)-3-hydroxyacyl]-alpha-D-glucosamine = a lipid A disaccharide + UDP + H(+). The protein operates within bacterial outer membrane biogenesis; LPS lipid A biosynthesis. Its function is as follows. Condensation of UDP-2,3-diacylglucosamine and 2,3-diacylglucosamine-1-phosphate to form lipid A disaccharide, a precursor of lipid A, a phosphorylated glycolipid that anchors the lipopolysaccharide to the outer membrane of the cell. The protein is Lipid-A-disaccharide synthase (lpxB) of Chlamydia abortus (strain DSM 27085 / S26/3) (Chlamydophila abortus).